The sequence spans 182 residues: Adenine phosphoribosyltransferase (182 aa).

The protein belongs to the purine/pyrimidine phosphoribosyltransferase family. In terms of assembly, homodimer.

Its subcellular location is the cytoplasm. It catalyses the reaction AMP + diphosphate = 5-phospho-alpha-D-ribose 1-diphosphate + adenine. The protein operates within purine metabolism; AMP biosynthesis via salvage pathway; AMP from adenine: step 1/1. Its function is as follows. Catalyzes a salvage reaction resulting in the formation of AMP, that is energically less costly than de novo synthesis. The chain is Adenine phosphoribosyltransferase from Saccharopolyspora erythraea (strain ATCC 11635 / DSM 40517 / JCM 4748 / NBRC 13426 / NCIMB 8594 / NRRL 2338).